A 272-amino-acid polypeptide reads, in one-letter code: Cytosolic Fe-S cluster assembly factor NUBP2 (272 aa).

Position 23 to 30 (23 to 30) interacts with ATP; it reads GKGGVGKS. 2 residues coordinate [4Fe-4S] cluster: Cys-197 and Cys-200.

Belongs to the Mrp/NBP35 ATP-binding proteins family. NUBP2/CFD1 subfamily. Heterotetramer of 2 NUBP1 and 2 NUBP2 chains. [4Fe-4S] cluster is required as a cofactor.

It is found in the cytoplasm. Component of the cytosolic iron-sulfur (Fe/S) protein assembly (CIA) machinery. Required for maturation of extramitochondrial Fe-S proteins. The NUBP1-NUBP2 heterotetramer forms a Fe-S scaffold complex, mediating the de novo assembly of an Fe-S cluster and its transfer to target apoproteins. The chain is Cytosolic Fe-S cluster assembly factor NUBP2 from Gallus gallus (Chicken).